The sequence spans 576 residues: Arginine--tRNA ligase (576 aa).

A 'HIGH' region motif is present at residues Ala-126–His-136.

The protein belongs to the class-I aminoacyl-tRNA synthetase family. Monomer.

Its subcellular location is the cytoplasm. It catalyses the reaction tRNA(Arg) + L-arginine + ATP = L-arginyl-tRNA(Arg) + AMP + diphosphate. The protein is Arginine--tRNA ligase of Rickettsia bellii (strain OSU 85-389).